Here is a 20-residue protein sequence, read N- to C-terminus: Kassinatuerin-2 (20 aa).

At Ile-20 the chain carries Isoleucine amide.

In terms of tissue distribution, expressed by the skin dorsal glands.

The protein localises to the secreted. Has no antimicrobial activities against bacteria (E.coli and S.aureus) nor against the fungus C.albicans. This Kassina senegalensis (Senegal running frog) protein is Kassinatuerin-2.